The chain runs to 502 residues: ATP synthase subunit alpha (502 aa).

A disordered region spans residues 115–137 (VDGLGPVETTETRPIESPAPGVM). Position 169 to 176 (169 to 176 (GDRQTGKT)) interacts with ATP.

The protein belongs to the ATPase alpha/beta chains family. As to quaternary structure, F-type ATPases have 2 components, CF(1) - the catalytic core - and CF(0) - the membrane proton channel. CF(1) has five subunits: alpha(3), beta(3), gamma(1), delta(1), epsilon(1). CF(0) has three main subunits: a(1), b(2) and c(9-12). The alpha and beta chains form an alternating ring which encloses part of the gamma chain. CF(1) is attached to CF(0) by a central stalk formed by the gamma and epsilon chains, while a peripheral stalk is formed by the delta and b chains.

It localises to the cell membrane. The catalysed reaction is ATP + H2O + 4 H(+)(in) = ADP + phosphate + 5 H(+)(out). Functionally, produces ATP from ADP in the presence of a proton gradient across the membrane. The alpha chain is a regulatory subunit. In Geobacillus stearothermophilus (Bacillus stearothermophilus), this protein is ATP synthase subunit alpha.